Here is a 351-residue protein sequence, read N- to C-terminus: Spermidine/putrescine import ATP-binding protein PotA (351 aa).

The 231-residue stretch at 6–236 folds into the ABC transporter domain; that stretch reads LELRNVTKEY…PENAWVANFI (231 aa). An ATP-binding site is contributed by 38 to 45; it reads GPSGCGKT.

The protein belongs to the ABC transporter superfamily. Spermidine/putrescine importer (TC 3.A.1.11.1) family. The complex is composed of two ATP-binding proteins (PotA), two transmembrane proteins (PotB and PotC) and a solute-binding protein (PotD).

It localises to the cell membrane. The enzyme catalyses ATP + H2O + polyamine-[polyamine-binding protein]Side 1 = ADP + phosphate + polyamineSide 2 + [polyamine-binding protein]Side 1.. Part of the ABC transporter complex PotABCD involved in spermidine/putrescine import. Responsible for energy coupling to the transport system. In Mycoplasma mycoides subsp. mycoides SC (strain CCUG 32753 / NCTC 10114 / PG1), this protein is Spermidine/putrescine import ATP-binding protein PotA.